The following is a 373-amino-acid chain: MSEKKINLLDLDRKGLRALFTEMGEKPFRADQLMKWIYHFGETDFDAMNNINKVLRAKLSARCEVVAPEISSYQKSADGTIKFAINVGQGQEVETVYIPEEDRATLCVSSQVGCALECTFCSTAQQGFNRNLTVSEIIGQVWRVANFIGFQKETGERPITNVVMMGMGEPLLNLANVIPAMDIMLDDFGFSLSKRRVTVSTSGVVPALDKLGDALDVALAVSIHAPNDELRDVLVPVNKKYPLEEFLAGIRRYIAKSNANRGRVTVEYVMLDHINDSTDQAHELAKLMKDTPCKINLIPFNPYPGSPYGRSSNSRIDRFSKVLMEYGLTVIVRKTRGDDIDAACGQLAGDIRDRTKRLAKKRMQDSQISVTIN.

Residue E94 is the Proton acceptor of the active site. Residues 100–339 (EEDRATLCVS…VIVRKTRGDD (240 aa)) enclose the Radical SAM core domain. A disulfide bridge connects residues C107 and C344. 3 residues coordinate [4Fe-4S] cluster: C114, C118, and C121. Residues 168 to 169 (GE), S200, 222 to 224 (SIH), and N301 contribute to the S-adenosyl-L-methionine site. The active-site S-methylcysteine intermediate is C344.

This sequence belongs to the radical SAM superfamily. RlmN family. [4Fe-4S] cluster is required as a cofactor.

It is found in the cytoplasm. The catalysed reaction is adenosine(2503) in 23S rRNA + 2 reduced [2Fe-2S]-[ferredoxin] + 2 S-adenosyl-L-methionine = 2-methyladenosine(2503) in 23S rRNA + 5'-deoxyadenosine + L-methionine + 2 oxidized [2Fe-2S]-[ferredoxin] + S-adenosyl-L-homocysteine. It catalyses the reaction adenosine(37) in tRNA + 2 reduced [2Fe-2S]-[ferredoxin] + 2 S-adenosyl-L-methionine = 2-methyladenosine(37) in tRNA + 5'-deoxyadenosine + L-methionine + 2 oxidized [2Fe-2S]-[ferredoxin] + S-adenosyl-L-homocysteine. Specifically methylates position 2 of adenine 2503 in 23S rRNA and position 2 of adenine 37 in tRNAs. m2A2503 modification seems to play a crucial role in the proofreading step occurring at the peptidyl transferase center and thus would serve to optimize ribosomal fidelity. The chain is Dual-specificity RNA methyltransferase RlmN from Shewanella sediminis (strain HAW-EB3).